The following is an 87-amino-acid chain: Putative sodium channel toxin Ts40 (87 aa).

An N-terminal signal peptide occupies residues 1–19; that stretch reads MTALFYLLFLTSVIIETHQ. 3 cysteine pairs are disulfide-bonded: Cys41/Cys63, Cys47/Cys68, and Cys51/Cys70.

This sequence belongs to the long (4 C-C) scorpion toxin superfamily. Sodium channel inhibitor family. As to expression, expressed by the venom gland.

It localises to the secreted. Functionally, putative sodium channel toxin. The protein is Putative sodium channel toxin Ts40 of Tityus serrulatus (Brazilian scorpion).